The sequence spans 104 residues: Large ribosomal subunit protein bL21 (104 aa).

This sequence belongs to the bacterial ribosomal protein bL21 family. Part of the 50S ribosomal subunit. Contacts protein L20.

This protein binds to 23S rRNA in the presence of protein L20. This is Large ribosomal subunit protein bL21 from Opitutus terrae (strain DSM 11246 / JCM 15787 / PB90-1).